A 91-amino-acid polypeptide reads, in one-letter code: YcgL domain-containing protein ETA_15380 (91 aa).

The YcgL domain maps to 1 to 85 (MFCVIYRSPQ…PLESLLKIHL (85 aa)).

The polypeptide is YcgL domain-containing protein ETA_15380 (Erwinia tasmaniensis (strain DSM 17950 / CFBP 7177 / CIP 109463 / NCPPB 4357 / Et1/99)).